Here is a 316-residue protein sequence, read N- to C-terminus: Coproporphyrin III ferrochelatase (316 aa).

Fe-coproporphyrin III is bound by residues Tyr13, Arg30, 46 to 47 (RY), Ser54, and Tyr125. Residues His183 and Glu264 each contribute to the Fe(2+) site.

It belongs to the ferrochelatase family.

Its subcellular location is the cytoplasm. It catalyses the reaction Fe-coproporphyrin III + 2 H(+) = coproporphyrin III + Fe(2+). The protein operates within porphyrin-containing compound metabolism; protoheme biosynthesis. Its function is as follows. Involved in coproporphyrin-dependent heme b biosynthesis. Catalyzes the insertion of ferrous iron into coproporphyrin III to form Fe-coproporphyrin III. This chain is Coproporphyrin III ferrochelatase, found in Geobacillus kaustophilus (strain HTA426).